The chain runs to 350 residues: tRNA uridine(34) hydroxylase (350 aa).

The region spanning 146–240 (DDPDAVFIDM…YARRAREQGL (95 aa)) is the Rhodanese domain. Cys200 serves as the catalytic Cysteine persulfide intermediate. The span at 319–328 (RRRRAGRENG) shows a compositional bias: basic and acidic residues. Residues 319–350 (RRRRAGRENGNKIFNKSRGRLNSKLSIPDPAE) form a disordered region.

The protein belongs to the TrhO family.

The catalysed reaction is uridine(34) in tRNA + AH2 + O2 = 5-hydroxyuridine(34) in tRNA + A + H2O. Functionally, catalyzes oxygen-dependent 5-hydroxyuridine (ho5U) modification at position 34 in tRNAs. This Salmonella choleraesuis (strain SC-B67) protein is tRNA uridine(34) hydroxylase.